A 217-amino-acid polypeptide reads, in one-letter code: Deoxyribose-phosphate aldolase 1 (217 aa).

The active-site Proton donor/acceptor is aspartate 89. The active-site Schiff-base intermediate with acetaldehyde is lysine 151. Catalysis depends on lysine 180, which acts as the Proton donor/acceptor.

This sequence belongs to the DeoC/FbaB aldolase family. DeoC type 1 subfamily.

Its subcellular location is the cytoplasm. It catalyses the reaction 2-deoxy-D-ribose 5-phosphate = D-glyceraldehyde 3-phosphate + acetaldehyde. It functions in the pathway carbohydrate degradation; 2-deoxy-D-ribose 1-phosphate degradation; D-glyceraldehyde 3-phosphate and acetaldehyde from 2-deoxy-alpha-D-ribose 1-phosphate: step 2/2. Functionally, catalyzes a reversible aldol reaction between acetaldehyde and D-glyceraldehyde 3-phosphate to generate 2-deoxy-D-ribose 5-phosphate. The polypeptide is Deoxyribose-phosphate aldolase 1 (Cutibacterium acnes (strain DSM 16379 / KPA171202) (Propionibacterium acnes)).